A 164-amino-acid polypeptide reads, in one-letter code: Ribosome-binding factor A (164 aa).

The segment at alanine 123–arginine 164 is disordered. Positions glycine 132–glutamate 149 are enriched in acidic residues. Residues alanine 155–arginine 164 are compositionally biased toward pro residues.

Belongs to the RbfA family. Monomer. Binds 30S ribosomal subunits, but not 50S ribosomal subunits or 70S ribosomes.

It is found in the cytoplasm. In terms of biological role, one of several proteins that assist in the late maturation steps of the functional core of the 30S ribosomal subunit. Associates with free 30S ribosomal subunits (but not with 30S subunits that are part of 70S ribosomes or polysomes). Required for efficient processing of 16S rRNA. May interact with the 5'-terminal helix region of 16S rRNA. This is Ribosome-binding factor A from Rhodospirillum rubrum (strain ATCC 11170 / ATH 1.1.1 / DSM 467 / LMG 4362 / NCIMB 8255 / S1).